Reading from the N-terminus, the 366-residue chain is Isopropyl malate dehydrogenase htyC (366 aa).

71 to 73 (VGG) lines the NADP(+) pocket. Arginine 91 and arginine 130 together coordinate substrate. Residues aspartate 221, aspartate 246, and aspartate 250 each contribute to the Mg(2+) site. An NADP(+)-binding site is contributed by 277–282 (GCVHGI).

Belongs to the isocitrate and isopropylmalate dehydrogenases family. As to quaternary structure, homodimer. Mg(2+) serves as cofactor. The cofactor is Mn(2+).

The catalysed reaction is (2R,3S)-3-isopropylmalate + NAD(+) = 4-methyl-2-oxopentanoate + CO2 + NADH. It functions in the pathway antifungal biosynthesis. Isopropyl malate dehydrogenase; part of the gene cluster that mediates the de novo generation of L-homotyrosine from acetyl-CoA and 4-hydroxyphenyl-pyruvate. L-homotyrosine is a building block of echinocandin B, a fungal lipidated cyclic hexapeptide that acts as an antifungal agent. L-homotyrosine 4-hydroxyphenyl-pyruvate first undergoes an aldol-type condensation by htyA with the C-2 of acetyl-CoA followed by the release of CoA to form 2-(4-hydroxybenzyl)-malate. This is followed by isomerization of 2-(4-hydroxy-benzyl)-malate to 3-(4-hydroxybenzyl)-malate by htyD. Thereafter, 3-(4-hydroxybenzyl)-malate undergoes decarboxylation and oxidation to form 2-oxo-4-(4-hydroxybenzyl)butanoic acid, coupled to reduction of NAD(+) to NADH by htyC. The product then undergoes transamination catalyzed by htyB to form L-homotyrosine. This is Isopropyl malate dehydrogenase htyC from Aspergillus rugulosus (Emericella rugulosa).